The sequence spans 304 residues: Non-specific ribonucleoside hydrolase RihC (304 aa).

The active site involves His233.

The protein belongs to the IUNH family. RihC subfamily.

Its function is as follows. Hydrolyzes both purine and pyrimidine ribonucleosides with a broad-substrate specificity. The chain is Non-specific ribonucleoside hydrolase RihC from Escherichia coli O17:K52:H18 (strain UMN026 / ExPEC).